Consider the following 74-residue polypeptide: Invertase 3 (74 aa).

A signal peptide spans 1–19 (MLLQAFIFLLAGFAAKISA). N23 is a glycosylation site (N-linked (GlcNAc...) asparagine). Substrate contacts are provided by residues 39–42 (WMND) and Q60. The active site involves D42. N-linked (GlcNAc...) asparagine glycosylation is present at N64.

Belongs to the glycosyl hydrolase 32 family.

The catalysed reaction is Hydrolysis of terminal non-reducing beta-D-fructofuranoside residues in beta-D-fructofuranosides.. The sequence is that of Invertase 3 (SUC3) from Saccharomyces cerevisiae (Baker's yeast).